Consider the following 315-residue polypeptide: Putative ankyrin repeat protein R600 (315 aa).

5 ANK repeats span residues 79 to 108 (NECR…NVHV), 118 to 152 (SGFG…MVGT), 153 to 182 (DTCN…DIFS), 184 to 211 (QSKL…DVTD), and 212 to 240 (DNNS…DMNT).

This Acanthamoeba polyphaga mimivirus (APMV) protein is Putative ankyrin repeat protein R600.